A 138-amino-acid polypeptide reads, in one-letter code: Large ribosomal subunit protein uL13 (138 aa).

Belongs to the universal ribosomal protein uL13 family. As to quaternary structure, part of the 50S ribosomal subunit.

Its function is as follows. This protein is one of the early assembly proteins of the 50S ribosomal subunit, although it is not seen to bind rRNA by itself. It is important during the early stages of 50S assembly. In Picrophilus torridus (strain ATCC 700027 / DSM 9790 / JCM 10055 / NBRC 100828 / KAW 2/3), this protein is Large ribosomal subunit protein uL13.